We begin with the raw amino-acid sequence, 235 residues long: Small ribosomal subunit protein eS4 (235 aa).

One can recognise an S4 RNA-binding domain in the interval 38-99 (VTLLSIIRDY…GESYRVVYND (62 aa)).

The protein belongs to the eukaryotic ribosomal protein eS4 family.

In Thermoplasma acidophilum (strain ATCC 25905 / DSM 1728 / JCM 9062 / NBRC 15155 / AMRC-C165), this protein is Small ribosomal subunit protein eS4 (rps4e).